A 297-amino-acid polypeptide reads, in one-letter code: Probable endonuclease 4 (297 aa).

Zn(2+) contacts are provided by His-69, His-110, Glu-145, Asp-179, His-182, His-214, Asp-227, His-229, and Glu-259.

It belongs to the AP endonuclease 2 family. Zn(2+) is required as a cofactor.

It carries out the reaction Endonucleolytic cleavage to 5'-phosphooligonucleotide end-products.. Functionally, endonuclease IV plays a role in DNA repair. It cleaves phosphodiester bonds at apurinic or apyrimidinic (AP) sites, generating a 3'-hydroxyl group and a 5'-terminal sugar phosphate. The polypeptide is Probable endonuclease 4 (Listeria welshimeri serovar 6b (strain ATCC 35897 / DSM 20650 / CCUG 15529 / CIP 8149 / NCTC 11857 / SLCC 5334 / V8)).